Reading from the N-terminus, the 144-residue chain is ATP synthase epsilon chain (144 aa).

Belongs to the ATPase epsilon chain family. F-type ATPases have 2 components, CF(1) - the catalytic core - and CF(0) - the membrane proton channel. CF(1) has five subunits: alpha(3), beta(3), gamma(1), delta(1), epsilon(1). CF(0) has three main subunits: a, b and c.

Its subcellular location is the cell inner membrane. Functionally, produces ATP from ADP in the presence of a proton gradient across the membrane. The chain is ATP synthase epsilon chain from Ectopseudomonas mendocina (strain ymp) (Pseudomonas mendocina).